A 346-amino-acid chain; its full sequence is MQFPEIPPLDDALRPVLQAAIDDKTKPLGALGRLEALALQLGLIQGTARPVLRRPTVIVFAADHGVADAGVSAYPAEVTAQMVQNFLAGGAAINVFSRQHGIALEIVDAGVRVPLPAAPGLVNCRIADGTRNFANEPAMTPEQAAAAMTAGMARVLRHAQQGCNVIGFGEMGIANTSAAACLMQRLTGLPLEDCIGRGTGLDDAGLARKREVLAGALARHADAQAPLDVLATFGGFEIAMMAGAFLAAAASRMVILVDGFIATAALLVAQRLDPNVLQYCVFTHCSHERGHRALLAQFDAAPLLALDLRLGEGTGCALAWPLLASAAAFLNEMATFSGAGVSTASP.

Catalysis depends on E312, which acts as the Proton acceptor.

The protein belongs to the CobT family.

It catalyses the reaction 5,6-dimethylbenzimidazole + nicotinate beta-D-ribonucleotide = alpha-ribazole 5'-phosphate + nicotinate + H(+). It participates in nucleoside biosynthesis; alpha-ribazole biosynthesis; alpha-ribazole from 5,6-dimethylbenzimidazole: step 1/2. Its function is as follows. Catalyzes the synthesis of alpha-ribazole-5'-phosphate from nicotinate mononucleotide (NAMN) and 5,6-dimethylbenzimidazole (DMB). The polypeptide is Nicotinate-nucleotide--dimethylbenzimidazole phosphoribosyltransferase (Cupriavidus taiwanensis (strain DSM 17343 / BCRC 17206 / CCUG 44338 / CIP 107171 / LMG 19424 / R1) (Ralstonia taiwanensis (strain LMG 19424))).